Here is a 239-residue protein sequence, read N- to C-terminus: 2-C-methyl-D-erythritol 4-phosphate cytidylyltransferase (239 aa).

It belongs to the IspD/TarI cytidylyltransferase family. IspD subfamily.

The enzyme catalyses 2-C-methyl-D-erythritol 4-phosphate + CTP + H(+) = 4-CDP-2-C-methyl-D-erythritol + diphosphate. It participates in isoprenoid biosynthesis; isopentenyl diphosphate biosynthesis via DXP pathway; isopentenyl diphosphate from 1-deoxy-D-xylulose 5-phosphate: step 2/6. Its function is as follows. Catalyzes the formation of 4-diphosphocytidyl-2-C-methyl-D-erythritol from CTP and 2-C-methyl-D-erythritol 4-phosphate (MEP). This Acinetobacter baylyi (strain ATCC 33305 / BD413 / ADP1) protein is 2-C-methyl-D-erythritol 4-phosphate cytidylyltransferase.